Reading from the N-terminus, the 168-residue chain is NADH dehydrogenase [ubiquinone] 1 alpha subcomplex assembly factor 2 (168 aa).

Basic and acidic residues predominate over residues 108-118; it reads KEKLLQEESNK. The segment at 108-168 is disordered; sequence KEKLLQEESN…MPHGDKGHSQ (61 aa). Ser133 carries the post-translational modification Phosphoserine. Residues 144–155 show a composition bias toward polar residues; sequence ESPTSTGKTFQP.

The protein belongs to the complex I NDUFA12 subunit family. In terms of assembly, interacts with ARMC9.

The protein localises to the mitochondrion. Its function is as follows. Acts as a molecular chaperone for mitochondrial complex I assembly. Complex I functions in the transfer of electrons from NADH to the respiratory chain. The immediate electron acceptor for the enzyme is believed to be ubiquinone. Is involved in the initial steps of cilia formation, including removal of CP110 from the mother centrioles, docking of membrane vesicles to the mother centrioles, and establishment of the transition zone. The sequence is that of NADH dehydrogenase [ubiquinone] 1 alpha subcomplex assembly factor 2 (NDUFAF2) from Bos taurus (Bovine).